The chain runs to 419 residues: Putative zinc metalloprotease SP_0263 (419 aa).

His-18 provides a ligand contact to Zn(2+). Residue Glu-19 is part of the active site. Residue His-22 participates in Zn(2+) binding. Helical transmembrane passes span 169 to 191 (LITNFAGPMNNFILGVVVFWVLI), 345 to 367 (ILYFLAMISINIGIFNLIPIPAL), and 388 to 410 (EIETYVTLAGVVIMVVLMIAVTW).

The protein belongs to the peptidase M50B family. It depends on Zn(2+) as a cofactor.

Its subcellular location is the cell membrane. The polypeptide is Putative zinc metalloprotease SP_0263 (Streptococcus pneumoniae serotype 4 (strain ATCC BAA-334 / TIGR4)).